The chain runs to 111 residues: High mobility group protein Z (111 aa).

A DNA-binding region (HMG box) is located at residues 6 to 72 (PKRPLSAYML…EYNKAVKEYE (67 aa)). Residue Ser11 is modified to Phosphoserine. Positions 72 to 111 (EANGGTDSGAPKKRKKAAAKPAKKAKKKESSEEEEEDESE) are disordered. Residues 82-98 (PKKRKKAAAKPAKKAKK) show a composition bias toward basic residues. A compositionally biased stretch (acidic residues) spans 102–111 (SEEEEEDESE).

Belongs to the HMGB family.

The protein localises to the nucleus. Its subcellular location is the chromosome. In Drosophila melanogaster (Fruit fly), this protein is High mobility group protein Z (HmgZ).